Here is a 917-residue protein sequence, read N- to C-terminus: Auxin response factor 17 (917 aa).

The segment at residues 134–236 (FCKTLTASDT…QLLLGIRRAN (103 aa)) is a DNA-binding region (TF-B3). The segment at 571 to 649 (SVPNALSPFS…RPTAVPVPDP (79 aa)) is disordered. Composition is skewed to low complexity over residues 576–594 (LSPF…MTLQ) and 604–620 (SYPD…NTST). One can recognise a PB1 domain in the interval 786-870 (ATFVKVYKSG…SCIKILSPQE (85 aa)).

The protein belongs to the ARF family. As to quaternary structure, homodimers and heterodimers.

It is found in the nucleus. Functionally, auxin response factors (ARFs) are transcriptional factors that bind specifically to the DNA sequence 5'-TGTCTC-3' found in the auxin-responsive promoter elements (AuxREs). This is Auxin response factor 17 (ARF17) from Oryza sativa subsp. indica (Rice).